The primary structure comprises 480 residues: Protein nucleotidyltransferase YdiU (480 aa).

Residues glycine 86, glycine 88, arginine 89, lysine 109, aspartate 121, glycine 122, arginine 172, and arginine 179 each contribute to the ATP site. Aspartate 248 acts as the Proton acceptor in catalysis. Mg(2+)-binding residues include asparagine 249 and aspartate 258. Residue aspartate 258 coordinates ATP.

This sequence belongs to the SELO family. Mg(2+) is required as a cofactor. The cofactor is Mn(2+).

The enzyme catalyses L-seryl-[protein] + ATP = 3-O-(5'-adenylyl)-L-seryl-[protein] + diphosphate. The catalysed reaction is L-threonyl-[protein] + ATP = 3-O-(5'-adenylyl)-L-threonyl-[protein] + diphosphate. It carries out the reaction L-tyrosyl-[protein] + ATP = O-(5'-adenylyl)-L-tyrosyl-[protein] + diphosphate. It catalyses the reaction L-histidyl-[protein] + UTP = N(tele)-(5'-uridylyl)-L-histidyl-[protein] + diphosphate. The enzyme catalyses L-seryl-[protein] + UTP = O-(5'-uridylyl)-L-seryl-[protein] + diphosphate. The catalysed reaction is L-tyrosyl-[protein] + UTP = O-(5'-uridylyl)-L-tyrosyl-[protein] + diphosphate. Nucleotidyltransferase involved in the post-translational modification of proteins. It can catalyze the addition of adenosine monophosphate (AMP) or uridine monophosphate (UMP) to a protein, resulting in modifications known as AMPylation and UMPylation. This chain is Protein nucleotidyltransferase YdiU, found in Salmonella paratyphi A (strain ATCC 9150 / SARB42).